The primary structure comprises 154 residues: Peptide methionine sulfoxide reductase MsrB (154 aa).

Positions 28-150 constitute a MsrB domain; that stretch reads DQQWREQLSE…NSVSLIFNKI (123 aa). Zn(2+)-binding residues include Cys-67, Cys-70, Cys-116, and Cys-119. Cys-139 acts as the Nucleophile in catalysis.

The protein belongs to the MsrB Met sulfoxide reductase family. Requires Zn(2+) as cofactor.

The catalysed reaction is L-methionyl-[protein] + [thioredoxin]-disulfide + H2O = L-methionyl-(R)-S-oxide-[protein] + [thioredoxin]-dithiol. This is Peptide methionine sulfoxide reductase MsrB from Vibrio vulnificus (strain YJ016).